A 117-amino-acid polypeptide reads, in one-letter code: Transcription elongation factor SPT4 (117 aa).

Ala2 carries the post-translational modification N-acetylalanine. The interaction with SUPT5H stretch occupies residues 2 to 40 (ALETVPKDLRHLRACLLCSLVKTIDQFEYDGCDNCDAYL). Residues Cys16, Cys19, Cys33, and Cys36 each contribute to the Zn(2+) site. A C4-type zinc finger spans residues 16 to 36 (CLLCSLVKTIDQFEYDGCDNC).

This sequence belongs to the SPT4 family. In terms of assembly, interacts with SUPT5H to form DSIF. DSIF interacts with the positive transcription elongation factor b complex (P-TEFb complex), which is composed of CDK9 and cyclin-T (CCNT1 or CCNT2). DSIF interacts with RNA polymerase II, and this interaction is reduced by phosphorylation of the C-terminal domain (CTD) of POLR2A by P-TEFb. DSIF also interacts with the NELF complex, which is composed of NELFA, NELFB, NELFD and NELFE, and this interaction occurs following prior binding of DSIF to RNA polymerase II. DSIF also interacts with PRMT1/HRMT1L2, TATSF1, RNGTT/CAP1A, PRMT5/SKB1, SUPT6H, and can interact with PIN1. Ubiquitinated by UBR5 when not assembled in the DSIF complex, leading to its degradation: UBR5 recognizes and binds a degron that is not accessible when SUPT4H1 is part of the DSIF complex.

It is found in the nucleus. Its function is as follows. Component of the DRB sensitivity-inducing factor complex (DSIF complex), which regulates mRNA processing and transcription elongation by RNA polymerase II. DSIF positively regulates mRNA capping by stimulating the mRNA guanylyltransferase activity of RNGTT/CAP1A. DSIF also acts cooperatively with the negative elongation factor complex (NELF complex) to enhance transcriptional pausing at sites proximal to the promoter. Transcriptional pausing may facilitate the assembly of an elongation competent RNA polymerase II complex. DSIF and NELF promote pausing by inhibition of the transcription elongation factor TFIIS/S-II. TFIIS/S-II binds to RNA polymerase II at transcription pause sites and stimulates the weak intrinsic nuclease activity of the enzyme. Cleavage of blocked transcripts by RNA polymerase II promotes the resumption of transcription from the new 3' terminus and may allow repeated attempts at transcription through natural pause sites. In Pongo abelii (Sumatran orangutan), this protein is Transcription elongation factor SPT4 (SUPT4H1).